A 502-amino-acid chain; its full sequence is Glycerol kinase (502 aa).

Residue Thr14 participates in ADP binding. Residues Thr14, Thr15, and Ser16 each contribute to the ATP site. Thr14 provides a ligand contact to sn-glycerol 3-phosphate. Arg18 is a binding site for ADP. Sn-glycerol 3-phosphate is bound by residues Arg84, Glu85, Tyr136, and Asp246. Residues Arg84, Glu85, Tyr136, Asp246, and Gln247 each coordinate glycerol. 2 residues coordinate ADP: Thr268 and Gly311. Residues Thr268, Gly311, Gln315, and Gly412 each contribute to the ATP site. Residues Gly412 and Asn416 each coordinate ADP.

The protein belongs to the FGGY kinase family. As to quaternary structure, homotetramer and homodimer (in equilibrium). Heterodimer with EIIA-Glc. Binds 1 zinc ion per glycerol kinase EIIA-Glc dimer. The zinc ion is important for dimerization.

It carries out the reaction glycerol + ATP = sn-glycerol 3-phosphate + ADP + H(+). It functions in the pathway polyol metabolism; glycerol degradation via glycerol kinase pathway; sn-glycerol 3-phosphate from glycerol: step 1/1. With respect to regulation, activity of this regulatory enzyme is affected by several metabolites. Allosterically and non-competitively inhibited by fructose 1,6-bisphosphate (FBP) and unphosphorylated phosphocarrier protein EIIA-Glc (III-Glc), an integral component of the bacterial phosphotransferase (PTS) system. Functionally, key enzyme in the regulation of glycerol uptake and metabolism. Catalyzes the phosphorylation of glycerol to yield sn-glycerol 3-phosphate. This Shigella dysenteriae serotype 1 (strain Sd197) protein is Glycerol kinase.